A 524-amino-acid polypeptide reads, in one-letter code: Keratin, type II cytoskeletal 71 (524 aa).

Residues 1 to 130 (MSRQFTCKSG…DPEIQKVRAQ (130 aa)) form a head region. The tract at residues 131–166 (EREQIKALNNKFASFIDKVRFLEQQNQVLQTKWELL) is coil 1A. The region spanning 131 to 444 (EREQIKALNN…KLLESEECRM (314 aa)) is the IF rod domain. A linker 1 region spans residues 167 to 185 (QQLDLNNCKNNLEPILEGH). Residues 186 to 277 (ISNMRKQLET…CLFEAEMAQI (92 aa)) form a coil 1B region. The linker 12 stretch occupies residues 278 to 301 (QSHISDMSVILSMDNNRNLDLDSI). The coil 2 stretch occupies residues 302 to 440 (IDEVRAQYEE…ATYRKLLESE (139 aa)). Residues 441–524 (ECRMSGEYSS…LSTPSKKGGR (84 aa)) are tail. Positions 493–524 (GGENRSRGSASDYKDTLTKGSSLSTPSKKGGR) are disordered. A compositionally biased stretch (basic and acidic residues) spans 494-509 (GENRSRGSASDYKDTL). Polar residues predominate over residues 510 to 524 (TKGSSLSTPSKKGGR).

The protein belongs to the intermediate filament family. In terms of assembly, heterodimer of a type I and a type II keratin. Associates with KRT16 and/or KRT17. In terms of tissue distribution, specifically expressed in the inner root sheath (IRS) of the hair follicle. Present in Henle and the Huxley layers of the IRS, while expression in the cuticle is unsure (at protein level).

It is found in the cytoplasm. It localises to the cytoskeleton. Plays a central role in hair formation. Essential component of keratin intermediate filaments in the inner root sheath (IRS) of the hair follicle. This Mus musculus (Mouse) protein is Keratin, type II cytoskeletal 71 (Krt71).